The chain runs to 435 residues: Casein kinase 1-like protein 12 (435 aa).

The region spanning 9–278 (YRLGRKIGSG…LKRIFRDLFI (270 aa)) is the Protein kinase domain. Residues 15–23 (IGSGSFGEI) and K38 each bind ATP. Residue D128 is the Proton acceptor of the active site. Disordered stretches follow at residues 313-363 (VGTS…RGPM) and 394-414 (LRNSPVVTTPEGKRSSSTRKH).

It belongs to the protein kinase superfamily. CK1 Ser/Thr protein kinase family. Casein kinase I subfamily. As to quaternary structure, monomer. In terms of processing, autophosphorylated.

Its subcellular location is the cytoplasm. The enzyme catalyses L-seryl-[protein] + ATP = O-phospho-L-seryl-[protein] + ADP + H(+). It catalyses the reaction L-threonyl-[protein] + ATP = O-phospho-L-threonyl-[protein] + ADP + H(+). Its function is as follows. Casein kinases are operationally defined by their preferential utilization of acidic proteins such as caseins as substrates. It can phosphorylate a large number of proteins. The polypeptide is Casein kinase 1-like protein 12 (Arabidopsis thaliana (Mouse-ear cress)).